The primary structure comprises 181 residues: Large ribosomal subunit protein uL6 (181 aa).

Belongs to the universal ribosomal protein uL6 family. In terms of assembly, part of the 50S ribosomal subunit.

In terms of biological role, this protein binds to the 23S rRNA, and is important in its secondary structure. It is located near the subunit interface in the base of the L7/L12 stalk, and near the tRNA binding site of the peptidyltransferase center. The sequence is that of Large ribosomal subunit protein uL6 from Flavobacterium psychrophilum (strain ATCC 49511 / DSM 21280 / CIP 103535 / JIP02/86).